The primary structure comprises 317 residues: 4-diphosphocytidyl-2-C-methyl-D-erythritol kinase (317 aa).

The active site involves K11. 99–109 (PVAAGLAGGST) serves as a coordination point for ATP. The active site involves D141.

The protein belongs to the GHMP kinase family. IspE subfamily.

It carries out the reaction 4-CDP-2-C-methyl-D-erythritol + ATP = 4-CDP-2-C-methyl-D-erythritol 2-phosphate + ADP + H(+). It functions in the pathway isoprenoid biosynthesis; isopentenyl diphosphate biosynthesis via DXP pathway; isopentenyl diphosphate from 1-deoxy-D-xylulose 5-phosphate: step 3/6. In terms of biological role, catalyzes the phosphorylation of the position 2 hydroxy group of 4-diphosphocytidyl-2C-methyl-D-erythritol. The protein is 4-diphosphocytidyl-2-C-methyl-D-erythritol kinase of Nostoc sp. (strain PCC 7120 / SAG 25.82 / UTEX 2576).